Here is a 304-residue protein sequence, read N- to C-terminus: Protoheme IX farnesyltransferase 2 (304 aa).

Transmembrane regions (helical) follow at residues 28 to 48 (VVAL…VVDF), 50 to 70 (WLQA…AAAF), 98 to 118 (ISVA…LYAL), 122 to 142 (LTAW…TMYL), 150 to 170 (IVIA…AVTG), 176 to 196 (AWLL…AIAI), 223 to 243 (ILLY…VGMV), 245 to 265 (SVYL…AWKL), and 282 to 302 (IYHL…GLFF).

This sequence belongs to the UbiA prenyltransferase family. Protoheme IX farnesyltransferase subfamily.

The protein resides in the cell inner membrane. It carries out the reaction heme b + (2E,6E)-farnesyl diphosphate + H2O = Fe(II)-heme o + diphosphate. It functions in the pathway porphyrin-containing compound metabolism; heme O biosynthesis; heme O from protoheme: step 1/1. Its function is as follows. Converts heme B (protoheme IX) to heme O by substitution of the vinyl group on carbon 2 of heme B porphyrin ring with a hydroxyethyl farnesyl side group. In Vibrio campbellii (strain ATCC BAA-1116), this protein is Protoheme IX farnesyltransferase 2.